We begin with the raw amino-acid sequence, 311 residues long: Protein translocase subunit SecF (311 aa).

6 helical membrane-spanning segments follow: residues 23–42 (VSYSFSIILSLISLIWISIY), 140–160 (IEAGAMAMLFSFLAIMVYIGV), 164–184 (WYFGFGILIALVHDVILALGF), 194–214 (LSTIAAVLTIIGYSVNDSVVI), 246–266 (ILTVITTLLANLALILFGGKA), and 272–292 (VLVFFGIIAGTYSSIFISAPI).

Belongs to the SecD/SecF family. SecF subfamily. As to quaternary structure, forms a complex with SecD. Part of the essential Sec protein translocation apparatus which comprises SecA, SecYEG and auxiliary proteins SecDF-YajC and YidC.

The protein resides in the cell inner membrane. Part of the Sec protein translocase complex. Interacts with the SecYEG preprotein conducting channel. SecDF uses the proton motive force (PMF) to complete protein translocation after the ATP-dependent function of SecA. In Rickettsia prowazekii (strain Madrid E), this protein is Protein translocase subunit SecF.